We begin with the raw amino-acid sequence, 332 residues long: Ribosomal RNA small subunit methyltransferase C (332 aa).

It belongs to the methyltransferase superfamily. RsmC family. Monomer.

It localises to the cytoplasm. It carries out the reaction guanosine(1207) in 16S rRNA + S-adenosyl-L-methionine = N(2)-methylguanosine(1207) in 16S rRNA + S-adenosyl-L-homocysteine + H(+). Specifically methylates the guanine in position 1207 of 16S rRNA in the 30S particle. The polypeptide is Ribosomal RNA small subunit methyltransferase C (Pseudomonas entomophila (strain L48)).